Consider the following 549-residue polypeptide: MFAPSLAAFRAMALPIPRLAPVMKSVQPASFPVLGSMAARLSTARGGRGLRAGRRPPGGPKGAAAAEEMAVPIGAALQDPNVGMAPVNDDLEIIEEVMKEDGFQPDPPPPGSPHDPPKLIPRGLGVPVGRRDPPRDPPRLIITEQPKKTGMRFRYECEGRSAGSILGESSTEASKTLPAIELLNCQAIPEVQVTACLVWKDWPHRVHPHGLVGKDCSNGLCQVRLQPHANPRHSFSNLGIQCVKKKEIEAAIEKKLQLGIDPFKAGSLKNHQEVDMNVVRICFQASYRDGSGRTRQLSPVLSEPIFDKKSTNTSELRICRMNKESGPCTGGEELYLLCDKVQKEDIAVVFRKEPWEARADFSQADVHRQGAIVLRTPPYRCVQLSEPVQVEVFLQRLTDRARSRGCPYTYLPRERDAYGVKVKRKRGMPDLLEELSGADPYGIEAKRRKPPPGFMDHFAPLPAADEAFALLADPLDPLSHLPPPSTPQILWGRSYFRTPPPTETPTPPTASWGPICSQGTSEGGGGRTSPRYRPPPPLKWGSQWAPPHQ.

2 disordered regions span residues 100–141 (EDGF…PRLI) and 497–549 (RTPP…PPHQ). The span at 105–114 (PDPPPPGSPH) shows a compositional bias: pro residues. Positions 129–138 (GRRDPPRDPP) are enriched in basic and acidic residues. The region spanning 135–412 (RDPPRLIITE…SRGCPYTYLP (278 aa)) is the RHD domain. The span at 498–508 (TPPPTETPTPP) shows a compositional bias: pro residues.

Component of the NF-kappa-B RelB-p50 complex. Component of the NF-kappa-B RelB-p52 complex.

It is found in the nucleus. Functionally, NF-kappa-B is a pleiotropic transcription factor which is present in almost all cell types and is involved in many biological processed such as inflammation, immunity, differentiation, cell growth, tumorigenesis and apoptosis. NF-kappa-B is a homo- or heterodimeric complex formed by the Rel-like domain-containing proteins RELA/p65, RELB, NFKB1/p105, NFKB1/p50, REL and NFKB2/p52. The dimers bind at kappa-B sites in the DNA of their target genes and the individual dimers have distinct preferences for different kappa-B sites that they can bind with distinguishable affinity and specificity. Different dimer combinations act as transcriptional activators or repressors, respectively. NF-kappa-B is controlled by various mechanisms of post-translational modification and subcellular compartmentalization as well as by interactions with other cofactors or corepressors. NF-kappa-B complexes are held in the cytoplasm in an inactive state complexed with members of the NF-kappa-B inhibitor (I-kappa-B) family. In a conventional activation pathway, I-kappa-B is phosphorylated by I-kappa-B kinases (IKKs) in response to different activators, subsequently degraded thus liberating the active NF-kappa-B complex which translocates to the nucleus. NF-kappa-B heterodimeric RelB-p50 and RelB-p52 complexes are transcriptional activators. Stimulates promoter activity in the presence of p49- and p50-NF-kappa-B. Neither associates with DNA nor with p65-NF-kappa-B. May play a role in the regulation of the circadian clock. The sequence is that of Transcription factor RelB homolog (RELB) from Gallus gallus (Chicken).